The following is a 631-amino-acid chain: Glutamyl-tRNA(Gln) amidotransferase subunit E (631 aa).

This sequence belongs to the GatB/GatE family. GatE subfamily. In terms of assembly, heterodimer of GatD and GatE.

The catalysed reaction is L-glutamyl-tRNA(Gln) + L-glutamine + ATP + H2O = L-glutaminyl-tRNA(Gln) + L-glutamate + ADP + phosphate + H(+). In terms of biological role, allows the formation of correctly charged Gln-tRNA(Gln) through the transamidation of misacylated Glu-tRNA(Gln) in organisms which lack glutaminyl-tRNA synthetase. The reaction takes place in the presence of glutamine and ATP through an activated gamma-phospho-Glu-tRNA(Gln). The GatDE system is specific for glutamate and does not act on aspartate. In Methanococcus maripaludis (strain C6 / ATCC BAA-1332), this protein is Glutamyl-tRNA(Gln) amidotransferase subunit E.